The primary structure comprises 420 residues: Gamma-glutamyl phosphate reductase (420 aa).

It belongs to the gamma-glutamyl phosphate reductase family.

Its subcellular location is the cytoplasm. It carries out the reaction L-glutamate 5-semialdehyde + phosphate + NADP(+) = L-glutamyl 5-phosphate + NADPH + H(+). It functions in the pathway amino-acid biosynthesis; L-proline biosynthesis; L-glutamate 5-semialdehyde from L-glutamate: step 2/2. Functionally, catalyzes the NADPH-dependent reduction of L-glutamate 5-phosphate into L-glutamate 5-semialdehyde and phosphate. The product spontaneously undergoes cyclization to form 1-pyrroline-5-carboxylate. This is Gamma-glutamyl phosphate reductase from Streptococcus pneumoniae serotype 2 (strain D39 / NCTC 7466).